Reading from the N-terminus, the 105-residue chain is Flagellar transcriptional regulator FlhD (105 aa).

The protein belongs to the FlhD family. As to quaternary structure, homodimer; disulfide-linked. Forms a heterohexamer composed of two FlhC and four FlhD subunits. Each FlhC binds a FlhD dimer, forming a heterotrimer, and a hexamer assembles by dimerization of two heterotrimers.

The protein resides in the cytoplasm. In terms of biological role, functions in complex with FlhC as a master transcriptional regulator that regulates transcription of several flagellar and non-flagellar operons by binding to their promoter region. Activates expression of class 2 flagellar genes, including fliA, which is a flagellum-specific sigma factor that turns on the class 3 genes. Also regulates genes whose products function in a variety of physiological pathways. This is Flagellar transcriptional regulator FlhD from Cupriavidus pinatubonensis (strain JMP 134 / LMG 1197) (Cupriavidus necator (strain JMP 134)).